A 309-amino-acid chain; its full sequence is Putative taste receptor type 2 member 33 (309 aa).

Residue methionine 1 is a topological domain, extracellular. Residues 2–22 form a helical membrane-spanning segment; the sequence is VYFLPIIFSILVVFAFVLGNF. The Cytoplasmic portion of the chain corresponds to 23-46; it reads SNGFIALVNVIDWVKRQKISSADQ. A helical transmembrane segment spans residues 47-67; sequence ILTALVVSRVGLLWVILLHWY. At 68-86 the chain is on the extracellular side; sequence ANVFNSALYSLEVRIVASN. N-linked (GlcNAc...) asparagine glycosylation occurs at asparagine 86. A helical membrane pass occupies residues 87–107; the sequence is ISAVINHFSIWLAASLSIFYL. At 108–127 the chain is on the cytoplasmic side; it reads LKIANFSNLIFLHLKKRIKS. The helical transmembrane segment at 128–148 threads the bilayer; it reads VVLVILLGPLVFLICNLAVIT. At 149-181 the chain is on the extracellular side; sequence MDERVWTKEYEGNVTWKIKLRNAIHLSSLTVTT. The N-linked (GlcNAc...) asparagine glycan is linked to asparagine 161. The helical transmembrane segment at 182–202 threads the bilayer; it reads LANLIPFTLSLICFLLLICSL. The Cytoplasmic segment spans residues 203–229; that stretch reads CKHLKKMQLHSKGSQDPSTKVHIKALQ. A helical membrane pass occupies residues 230–250; sequence TVISFLMLCAIYFLSIMISVW. At 251-259 the chain is on the extracellular side; the sequence is NLRSLENKP. The helical transmembrane segment at 260-280 threads the bilayer; it reads VFMFCKAIRFSYPSIHPFILI. Residues 281-309 lie on the Cytoplasmic side of the membrane; it reads WGNKKLKQTFLSVFWQVRYWVKGEKPSSP.

Belongs to the G-protein coupled receptor T2R family.

It localises to the membrane. Functionally, putative taste receptor which may play a role in the perception of bitterness. The protein is Putative taste receptor type 2 member 33 of Homo sapiens (Human).